The following is a 460-amino-acid chain: 3-isopropylmalate dehydratase large subunit (460 aa).

[4Fe-4S] cluster is bound by residues C338, C398, and C401.

Belongs to the aconitase/IPM isomerase family. LeuC type 1 subfamily. In terms of assembly, heterodimer of LeuC and LeuD. [4Fe-4S] cluster is required as a cofactor.

It carries out the reaction (2R,3S)-3-isopropylmalate = (2S)-2-isopropylmalate. It participates in amino-acid biosynthesis; L-leucine biosynthesis; L-leucine from 3-methyl-2-oxobutanoate: step 2/4. Catalyzes the isomerization between 2-isopropylmalate and 3-isopropylmalate, via the formation of 2-isopropylmaleate. The chain is 3-isopropylmalate dehydratase large subunit from Streptococcus thermophilus (strain CNRZ 1066).